The primary structure comprises 417 residues: Glucose-1-phosphate adenylyltransferase (417 aa).

Alpha-D-glucose 1-phosphate is bound by residues Y105, G170, 185-186 (EK), and S203.

Belongs to the bacterial/plant glucose-1-phosphate adenylyltransferase family. In terms of assembly, homotetramer.

The catalysed reaction is alpha-D-glucose 1-phosphate + ATP + H(+) = ADP-alpha-D-glucose + diphosphate. The protein operates within glycan biosynthesis; glycogen biosynthesis. Its function is as follows. Involved in the biosynthesis of ADP-glucose, a building block required for the elongation reactions to produce glycogen. Catalyzes the reaction between ATP and alpha-D-glucose 1-phosphate (G1P) to produce pyrophosphate and ADP-Glc. The sequence is that of Glucose-1-phosphate adenylyltransferase from Granulibacter bethesdensis (strain ATCC BAA-1260 / CGDNIH1).